Here is a 147-residue protein sequence, read N- to C-terminus: Neocarzinostatin (147 aa).

Residues 1–34 (MVPISIIRNRVAKVAVGSAAVLGLAVGFQTPAVA) form the signal peptide. 2 disulfide bridges follow: Cys-71–Cys-81 and Cys-122–Cys-127.

This sequence belongs to the neocarzinostatin family.

Functionally, NCS has antibiotic activity (for Gram-positive bacteria) and antitumor activity (for certain mouse tumors). NCS binds non-covalently to a chromophore which is the cytotoxic and mutagenic component of the antibiotic. The chromophore binds to DNA as a weak intercalator and causes single- and double-strand breaks. This chain is Neocarzinostatin (ncsA), found in Streptomyces carzinostaticus.